We begin with the raw amino-acid sequence, 508 residues long: Photosystem II CP47 reaction center protein (508 aa).

Transmembrane regions (helical) follow at residues 21–36, 101–115, 140–156, 203–218, 237–252, and 457–472; these read AVHLMHTALVSGWAGS, IILSGLLFLAAIWHW, GIHLFLSGVLCFGFGAF, IAAGILGIIAGLFHLS, VLSSSIAAVFWAAFVV, and NFALLFFFGHIWHGSR.

It belongs to the PsbB/PsbC family. PsbB subfamily. As to quaternary structure, PSII is composed of 1 copy each of membrane proteins PsbA, PsbB, PsbC, PsbD, PsbE, PsbF, PsbH, PsbI, PsbJ, PsbK, PsbL, PsbM, PsbT, PsbX, PsbY, PsbZ, Psb30/Ycf12, at least 3 peripheral proteins of the oxygen-evolving complex and a large number of cofactors. It forms dimeric complexes. It depends on Binds multiple chlorophylls. PSII binds additional chlorophylls, carotenoids and specific lipids. as a cofactor.

The protein resides in the plastid. Its subcellular location is the chloroplast thylakoid membrane. In terms of biological role, one of the components of the core complex of photosystem II (PSII). It binds chlorophyll and helps catalyze the primary light-induced photochemical processes of PSII. PSII is a light-driven water:plastoquinone oxidoreductase, using light energy to abstract electrons from H(2)O, generating O(2) and a proton gradient subsequently used for ATP formation. The protein is Photosystem II CP47 reaction center protein of Staurastrum punctulatum (Green alga).